The chain runs to 825 residues: Probable phosphoketolase (825 aa).

The protein belongs to the XFP family. Thiamine diphosphate is required as a cofactor.

In Schizosaccharomyces pombe (strain 972 / ATCC 24843) (Fission yeast), this protein is Probable phosphoketolase.